The following is a 95-amino-acid chain: Co-chaperonin GroES (95 aa).

Belongs to the GroES chaperonin family. As to quaternary structure, heptamer of 7 subunits arranged in a ring. Interacts with the chaperonin GroEL.

The protein resides in the cytoplasm. Functionally, together with the chaperonin GroEL, plays an essential role in assisting protein folding. The GroEL-GroES system forms a nano-cage that allows encapsulation of the non-native substrate proteins and provides a physical environment optimized to promote and accelerate protein folding. GroES binds to the apical surface of the GroEL ring, thereby capping the opening of the GroEL channel. The polypeptide is Co-chaperonin GroES (Lachnoclostridium phytofermentans (strain ATCC 700394 / DSM 18823 / ISDg) (Clostridium phytofermentans)).